The chain runs to 87 residues: Transcription factor ILI4 (87 aa).

Residues 1 to 54 (MSSRRSSRSSVSEEEINELISKLQSLLPSSRRRGANQASTTKLLKETCSYIKSL) enclose the bHLH domain.

Belongs to the bHLH protein family. In terms of assembly, interacts with LO9-177. Expressed in phloem of leaf blades and sheaths, lamina joints, filaments before anthesis, vasculare bundles of the ovule, lemma and palea, and embryos.

The protein resides in the cytoplasm. Its function is as follows. Atypical and probable non DNA-binding bHLH transcription factor that acts as a positive regulator of brassinosteroid (BR) response. Controls lamina inclination by participating in two BR signaling pathways involving BRI1 and RGA1. Involved in the RLI1-dependent modulation of leaf inclination by promoting lamina joint cell elongation, especially in response to phosphate (Pi) availability. The sequence is that of Transcription factor ILI4 (ILI4) from Oryza sativa subsp. japonica (Rice).